Reading from the N-terminus, the 370-residue chain is Cyclic dehypoxanthine futalosine synthase (370 aa).

The region spanning 50–295 (TTFVIGRNVN…QSSWVTMGPE (246 aa)) is the Radical SAM core domain. [4Fe-4S] cluster-binding residues include cysteine 64, cysteine 68, and cysteine 71.

This sequence belongs to the radical SAM superfamily. MqnC family. [4Fe-4S] cluster is required as a cofactor.

The catalysed reaction is dehypoxanthine futalosine + S-adenosyl-L-methionine = cyclic dehypoxanthinylfutalosinate + 5'-deoxyadenosine + L-methionine + H(+). It participates in quinol/quinone metabolism; menaquinone biosynthesis. In terms of biological role, radical SAM enzyme that catalyzes the cyclization of dehypoxanthine futalosine (DHFL) into cyclic dehypoxanthine futalosine (CDHFL), a step in the biosynthesis of menaquinone (MK, vitamin K2). This Halalkalibacterium halodurans (strain ATCC BAA-125 / DSM 18197 / FERM 7344 / JCM 9153 / C-125) (Bacillus halodurans) protein is Cyclic dehypoxanthine futalosine synthase.